A 118-amino-acid polypeptide reads, in one-letter code: D-dopachrome decarboxylase (118 aa).

The residue at position 2 (proline 2) is an N-acetylproline. The residue at position 33 (lysine 33) is an N6-acetyllysine.

The protein belongs to the MIF family. As to quaternary structure, homotrimer.

Its subcellular location is the cytoplasm. It catalyses the reaction D-dopachrome + H(+) = 5,6-dihydroxyindole + CO2. In terms of biological role, tautomerization of D-dopachrome with decarboxylation to give 5,6-dihydroxyindole (DHI). The protein is D-dopachrome decarboxylase (DDT) of Bos taurus (Bovine).